A 252-amino-acid chain; its full sequence is ATP synthase subunit a (252 aa).

Transmembrane regions (helical) follow at residues 29-49, 87-107, 117-137, 146-166, 196-216, and 219-239; these read FTNV…FLFI, FFPL…IGLF, IMIT…YGFY, LFVP…IEVI, FIVS…LPLI, and VAIT…FTVL.

It belongs to the ATPase A chain family. As to quaternary structure, F-type ATPases have 2 components, CF(1) - the catalytic core - and CF(0) - the membrane proton channel. CF(1) has five subunits: alpha(3), beta(3), gamma(1), delta(1), epsilon(1). CF(0) has three main subunits: a(1), b(2) and c(9-12). The alpha and beta chains form an alternating ring which encloses part of the gamma chain. CF(1) is attached to CF(0) by a central stalk formed by the gamma and epsilon chains, while a peripheral stalk is formed by the delta and b chains.

It is found in the cell inner membrane. In terms of biological role, key component of the proton channel; it plays a direct role in the translocation of protons across the membrane. The sequence is that of ATP synthase subunit a from Bartonella henselae (strain ATCC 49882 / DSM 28221 / CCUG 30454 / Houston 1) (Rochalimaea henselae).